The primary structure comprises 1309 residues: Tetratricopeptide repeat protein 41 (1309 aa).

6 TPR repeats span residues 399 to 432 (PQLEMDFLNEDSNVLVFSLLIEVFMAAISLKPCI), 651 to 684 (WIQEKPNGLLYFQHQSLRNAVEHKMLGVTISVRE), 817 to 851 (LTFLLFLWGFLTLLGNRRANNLFSGAAPFLVSVQS), 859 to 892 (LKAQNAIGELYLDIGMMQKGLTYFQKAWSNLLRF), 989 to 1024 (MSYFSSAVLMEFLFSRSQRKQAIEYYKQVIKIKEKA), and 1042 to 1079 (SDTLCKLAGQLLSGDFCHHATMEAVSYLYRSLDLRAAH).

Its subcellular location is the cytoplasm. The chain is Tetratricopeptide repeat protein 41 from Rattus norvegicus (Rat).